A 446-amino-acid chain; its full sequence is Chromosomal replication initiator protein DnaA (446 aa).

The segment at 1-72 (MENILDLWNK…ADTIYELTGE (72 aa)) is domain I, interacts with DnaA modulators. The segment at 72–109 (EELSIKFIIPQNQDEVEAMPKSPIKKMSKEDPVDIPQN) is domain II. The segment at 110–326 (MLNPKYTFDT…GALIRVVAYS (217 aa)) is domain III, AAA+ region. ATP contacts are provided by G154, G156, K157, and T158. Residues 327 to 446 (SLINKDINAD…HVKEIKEQLK (120 aa)) form a domain IV, binds dsDNA region.

The protein belongs to the DnaA family. Oligomerizes as a right-handed, spiral filament on DNA at oriC.

It localises to the cytoplasm. In terms of biological role, plays an essential role in the initiation and regulation of chromosomal replication. ATP-DnaA binds to the origin of replication (oriC) to initiate formation of the DNA replication initiation complex once per cell cycle. Binds the DnaA box (a 9 base pair repeat at the origin) and separates the double-stranded (ds)DNA. Forms a right-handed helical filament on oriC DNA; dsDNA binds to the exterior of the filament while single-stranded (ss)DNA is stabiized in the filament's interior. The ATP-DnaA-oriC complex binds and stabilizes one strand of the AT-rich DNA unwinding element (DUE), permitting loading of DNA polymerase. After initiation quickly degrades to an ADP-DnaA complex that is not apt for DNA replication. Binds acidic phospholipids. This Bacillus pumilus (strain SAFR-032) protein is Chromosomal replication initiator protein DnaA.